We begin with the raw amino-acid sequence, 374 residues long: 3-dehydroquinate synthase (374 aa).

It belongs to the archaeal-type DHQ synthase family.

The enzyme catalyses 2-amino-2,3,7-trideoxy-D-lyxo-hept-6-ulosonate + NAD(+) + H2O = 3-dehydroquinate + NH4(+) + NADH + H(+). Catalyzes the oxidative deamination and cyclization of 2-amino-3,7-dideoxy-D-threo-hept-6-ulosonic acid (ADH) to yield 3-dehydroquinate (DHQ), which is fed into the canonical shikimic pathway of aromatic amino acid biosynthesis. The protein is 3-dehydroquinate synthase of Methanocella arvoryzae (strain DSM 22066 / NBRC 105507 / MRE50).